The chain runs to 49 residues: Large ribosomal subunit protein bL33 (49 aa).

This sequence belongs to the bacterial ribosomal protein bL33 family.

This chain is Large ribosomal subunit protein bL33, found in Lacticaseibacillus casei (strain BL23) (Lactobacillus casei).